The following is a 280-amino-acid chain: Energy-coupling factor transporter ATP-binding protein EcfA2 (280 aa).

The ABC transporter domain maps to 3 to 245; that stretch reads INLQNVSYTY…VSLLEKKQLG (243 aa). 40-47 is a binding site for ATP; it reads GHTGSGKS.

It belongs to the ABC transporter superfamily. Energy-coupling factor EcfA family. As to quaternary structure, forms a stable energy-coupling factor (ECF) transporter complex composed of 2 membrane-embedded substrate-binding proteins (S component), 2 ATP-binding proteins (A component) and 2 transmembrane proteins (T component).

It is found in the cell membrane. In terms of biological role, ATP-binding (A) component of a common energy-coupling factor (ECF) ABC-transporter complex. Unlike classic ABC transporters this ECF transporter provides the energy necessary to transport a number of different substrates. The chain is Energy-coupling factor transporter ATP-binding protein EcfA2 from Streptococcus pyogenes serotype M28 (strain MGAS6180).